A 444-amino-acid chain; its full sequence is Phosphoglucosamine mutase (444 aa).

Ser-103 serves as the catalytic Phosphoserine intermediate. Mg(2+) contacts are provided by Ser-103, Asp-241, Asp-243, and Asp-245. Ser-103 is subject to Phosphoserine.

It belongs to the phosphohexose mutase family. The cofactor is Mg(2+). In terms of processing, activated by phosphorylation.

The catalysed reaction is alpha-D-glucosamine 1-phosphate = D-glucosamine 6-phosphate. Its function is as follows. Catalyzes the conversion of glucosamine-6-phosphate to glucosamine-1-phosphate. The protein is Phosphoglucosamine mutase of Deinococcus geothermalis (strain DSM 11300 / CIP 105573 / AG-3a).